A 414-amino-acid chain; its full sequence is Tryptophan synthase beta chain (414 aa).

Lysine 105 carries the post-translational modification N6-(pyridoxal phosphate)lysine.

This sequence belongs to the TrpB family. In terms of assembly, tetramer of two alpha and two beta chains. It depends on pyridoxal 5'-phosphate as a cofactor.

The catalysed reaction is (1S,2R)-1-C-(indol-3-yl)glycerol 3-phosphate + L-serine = D-glyceraldehyde 3-phosphate + L-tryptophan + H2O. It participates in amino-acid biosynthesis; L-tryptophan biosynthesis; L-tryptophan from chorismate: step 5/5. Its function is as follows. The beta subunit is responsible for the synthesis of L-tryptophan from indole and L-serine. The protein is Tryptophan synthase beta chain of Gloeobacter violaceus (strain ATCC 29082 / PCC 7421).